The primary structure comprises 624 residues: Double-stranded RNA-binding protein Staufen homolog 2 (624 aa).

DRBM domains lie at 55–122, 142–228, 254–321, 354–422, and 540–604; these read STSI…NGLA, QRAN…SEIS, MKSF…PEYG, RRRE…IADQ, and LTCL…EKAD. Residues 197-223 are disordered; the sequence is LRNEPIPERSSLNGEANRGPEEDKDAN. Over residues 214–223 the composition is skewed to basic and acidic residues; the sequence is RGPEEDKDAN. Disordered regions lie at residues 401 to 428 and 592 to 624; these read EKTG…TPKG and PFEQ…KAVV. The segment covering 415–426 has biased composition (polar residues); that stretch reads QNSGIADQTSTP. A compositionally biased stretch (basic and acidic residues) spans 596-605; sequence AKLRGEKADN.

Its function is as follows. RNA-binding protein required for the microtubule-dependent transport of RNAs within polarized cell types. In Xenopus tropicalis (Western clawed frog), this protein is Double-stranded RNA-binding protein Staufen homolog 2 (stau2).